Here is a 212-residue protein sequence, read N- to C-terminus: Ribosomal RNA small subunit methyltransferase G (212 aa).

S-adenosyl-L-methionine is bound by residues glycine 75, leucine 80, alanine 126–glutamine 127, and arginine 141.

It belongs to the methyltransferase superfamily. RNA methyltransferase RsmG family.

It is found in the cytoplasm. In terms of biological role, specifically methylates the N7 position of guanine in position 518 of 16S rRNA. The chain is Ribosomal RNA small subunit methyltransferase G from Beutenbergia cavernae (strain ATCC BAA-8 / DSM 12333 / CCUG 43141 / JCM 11478 / NBRC 16432 / NCIMB 13614 / HKI 0122).